The primary structure comprises 351 residues: 3-dehydroquinate synthase (351 aa).

NAD(+) is bound by residues 60-65 (DGEEYK), 94-98 (GVISD), 118-119 (TT), Lys-131, Lys-140, and 158-161 (FLKT). The Zn(2+) site is built by Glu-173, His-239, and His-256.

Belongs to the sugar phosphate cyclases superfamily. Dehydroquinate synthase family. Co(2+) is required as a cofactor. The cofactor is Zn(2+). NAD(+) serves as cofactor.

The protein localises to the cytoplasm. It carries out the reaction 7-phospho-2-dehydro-3-deoxy-D-arabino-heptonate = 3-dehydroquinate + phosphate. The protein operates within metabolic intermediate biosynthesis; chorismate biosynthesis; chorismate from D-erythrose 4-phosphate and phosphoenolpyruvate: step 2/7. Its function is as follows. Catalyzes the conversion of 3-deoxy-D-arabino-heptulosonate 7-phosphate (DAHP) to dehydroquinate (DHQ). The polypeptide is 3-dehydroquinate synthase (Campylobacter jejuni subsp. jejuni serotype O:23/36 (strain 81-176)).